A 261-amino-acid polypeptide reads, in one-letter code: Potassium/proton antiporter CemA (261 aa).

3 consecutive transmembrane segments (helical) span residues 138 to 158, 186 to 206, and 221 to 241; these read IISH…CLIL, ILLV…ELMI, and IISG…KYWI.

The protein belongs to the CemA family.

It localises to the plastid. The protein localises to the chloroplast inner membrane. It catalyses the reaction K(+)(in) + H(+)(out) = K(+)(out) + H(+)(in). Its function is as follows. Contributes to K(+)/H(+) antiport activity by supporting proton efflux to control proton extrusion and homeostasis in chloroplasts in a light-dependent manner to modulate photosynthesis. Prevents excessive induction of non-photochemical quenching (NPQ) under continuous-light conditions. Indirectly promotes efficient inorganic carbon uptake into chloroplasts. In Cryptomeria japonica (Japanese cedar), this protein is Potassium/proton antiporter CemA.